Reading from the N-terminus, the 251-residue chain is Triosephosphate isomerase (251 aa).

A substrate-binding site is contributed by 9 to 11 (NWK). His95 serves as the catalytic Electrophile. The active-site Proton acceptor is the Glu167. Substrate-binding positions include Gly173, Ser212, and 233 to 234 (GG).

The protein belongs to the triosephosphate isomerase family. As to quaternary structure, homodimer.

It localises to the cytoplasm. The enzyme catalyses D-glyceraldehyde 3-phosphate = dihydroxyacetone phosphate. The protein operates within carbohydrate biosynthesis; gluconeogenesis. It functions in the pathway carbohydrate degradation; glycolysis; D-glyceraldehyde 3-phosphate from glycerone phosphate: step 1/1. In terms of biological role, involved in the gluconeogenesis. Catalyzes stereospecifically the conversion of dihydroxyacetone phosphate (DHAP) to D-glyceraldehyde-3-phosphate (G3P). In Pseudomonas paraeruginosa (strain DSM 24068 / PA7) (Pseudomonas aeruginosa (strain PA7)), this protein is Triosephosphate isomerase.